A 598-amino-acid chain; its full sequence is uncharacterized protein (598 aa).

Residues 1–19 (MSVPLRFSTPSSSPSASDN) show a composition bias toward low complexity. Disordered regions lie at residues 1–54 (MSVP…MRPK), 139–176 (QKNQEARSRANSRVNSRANSRANSSVSLAGMDGSPNWK), and 194–279 (EAQL…ITMP). Residues 1–313 (MSVPLRFSTP…CKIRHFFREG (313 aa)) lie on the Cytoplasmic side of the membrane. Residues 30 to 48 (ELDTFNTTDVPRRVNTTKA) are compositionally biased toward polar residues. Over residues 147–165 (RANSRVNSRANSRANSSVS) the composition is skewed to low complexity. Polar residues-rich tracts occupy residues 218-242 (FSLQSSRQPSIAEEQPQTQRKSSAI) and 255-276 (PRNNVSFSRKPSIAEQDSSQDI). Residues 314–334 (FAEFLGTLVLVVFGVGSNLQA) form a helical membrane-spanning segment. The Extracellular portion of the chain corresponds to 335-346 (TVTNGAGGSFES). A helical membrane pass occupies residues 347–367 (LSFAWGFGCMLGVYIAGGISG). Topologically, residues 368–388 (GHVNPAVTISLAIFRKFPWYK) are cytoplasmic. Residues 371–373 (NPA) carry the NPA 1 motif. The helical transmembrane segment at 389 to 409 (VPIYIFFQIWGAFFGGALAYG) threads the bilayer. Residues 410 to 444 (YHWSSITEFEGGKDIRTPATGGCLYTNPKPYVTWR) are Extracellular-facing. The chain crosses the membrane as a helical span at residues 445-465 (NAFFDEFIGTAVLVGCLFAIL). The Cytoplasmic portion of the chain corresponds to 466 to 473 (DDTNSPPT). The helical transmembrane segment at 474-494 (QGMTAFIVGLLIAAIGMALGY) threads the bilayer. The Extracellular segment spans residues 495 to 532 (QTSFTLNPARDLGPRMFAWWIGYGPHSFHLYHWWWTWG). Residues 501-503 (NPA) carry the NPA 2 motif. Residues 533 to 553 (AWGGTIGGGIAGGLIYDLVIF) traverse the membrane as a helical segment. The Cytoplasmic portion of the chain corresponds to 554–598 (TGPESPLNYPDNGFIDKKVHQITAKFEKEEEVENLEKTDSPIENN).

The protein belongs to the MIP/aquaporin (TC 1.A.8) family.

It is found in the membrane. This is an uncharacterized protein from Schizosaccharomyces pombe (strain 972 / ATCC 24843) (Fission yeast).